Here is a 238-residue protein sequence, read N- to C-terminus: 7-cyano-7-deazaguanine synthase (238 aa).

14 to 24 (FSGGQDSATCL) contacts ATP. Residues cysteine 202, cysteine 217, cysteine 220, and cysteine 223 each contribute to the Zn(2+) site.

The protein belongs to the QueC family. Zn(2+) serves as cofactor.

It catalyses the reaction 7-carboxy-7-deazaguanine + NH4(+) + ATP = 7-cyano-7-deazaguanine + ADP + phosphate + H2O + H(+). The protein operates within purine metabolism; 7-cyano-7-deazaguanine biosynthesis. Functionally, catalyzes the ATP-dependent conversion of 7-carboxy-7-deazaguanine (CDG) to 7-cyano-7-deazaguanine (preQ(0)). In Nitrobacter hamburgensis (strain DSM 10229 / NCIMB 13809 / X14), this protein is 7-cyano-7-deazaguanine synthase.